The primary structure comprises 392 residues: Phospho-N-acetylmuramoyl-pentapeptide-transferase (392 aa).

10 helical membrane-spanning segments follow: residues 29 to 49 (AVLA…WVIG), 76 to 96 (TMGG…WFDL), 100 to 120 (FVWI…VDDW), 137 to 157 (YLWQ…CISE), 192 to 212 (AVSY…VIVG), 225 to 245 (GLAI…AYVT), 262 to 282 (SGEL…FLWF), 289 to 309 (VFMG…IAII), 314 to 334 (IVLA…MLQV), and 369 to 389 (QVVV…LSTL).

The protein belongs to the glycosyltransferase 4 family. MraY subfamily. Mg(2+) is required as a cofactor.

It is found in the cell inner membrane. The catalysed reaction is UDP-N-acetyl-alpha-D-muramoyl-L-alanyl-gamma-D-glutamyl-meso-2,6-diaminopimeloyl-D-alanyl-D-alanine + di-trans,octa-cis-undecaprenyl phosphate = di-trans,octa-cis-undecaprenyl diphospho-N-acetyl-alpha-D-muramoyl-L-alanyl-D-glutamyl-meso-2,6-diaminopimeloyl-D-alanyl-D-alanine + UMP. It functions in the pathway cell wall biogenesis; peptidoglycan biosynthesis. Catalyzes the initial step of the lipid cycle reactions in the biosynthesis of the cell wall peptidoglycan: transfers peptidoglycan precursor phospho-MurNAc-pentapeptide from UDP-MurNAc-pentapeptide onto the lipid carrier undecaprenyl phosphate, yielding undecaprenyl-pyrophosphoryl-MurNAc-pentapeptide, known as lipid I. The chain is Phospho-N-acetylmuramoyl-pentapeptide-transferase from Verminephrobacter eiseniae (strain EF01-2).